We begin with the raw amino-acid sequence, 461 residues long: Ig heavy chain C region, membrane-bound form (461 aa).

The tract at residues 1–99 is CH1; sequence ATPSPPTLYG…GESVWIKEIP (99 aa). A CH2 region spans residues 100 to 205; sequence DCKGDKVHPT…TQSRNITGSQ (106 aa). N-linked (GlcNAc...) asparagine glycosylation is found at asparagine 164, asparagine 200, asparagine 245, asparagine 275, asparagine 374, asparagine 411, asparagine 415, and asparagine 437. The interval 206–308 is CH3; the sequence is VPCSCNDPVI…PLRASIHKEE (103 aa). The tract at residues 309 to 418 is CH4; the sequence is VKDLREPSVS…IINRTVNKSS (110 aa). The helical transmembrane segment at 438-458 threads the bilayer; sequence ASTFIILFFLSIFYRAAVTLV.

The protein localises to the cell membrane. This chain is Ig heavy chain C region, membrane-bound form, found in Heterodontus francisci (Horn shark).